The sequence spans 886 residues: MSGFSPELIDYLEGKISFEEFERRREERKTREKKSLQEKGKLSAEENPDDSEVPSSSGINSTKSQDKDVNEGETSDGVRKSVHKVFASMLGENEDDEEEEEEEEEEEEEEETPEQPTAGDVFVLEMVLNRETKKMMKEKRPRSKLPRALRGLMGEANIRFARGEREEAILMCMEIIRQAPLAYEPFSTLAMIYEDQGDMEKSLQFELIAAHLNPSDTEEWVRLAEMSLEQDNIKQAIFCYTKALKYEPTNVRYLWERSSLYEQMGDHKMAMDGYRRILNLLSPSDGERFMQLARDMAKSYYEANDVTSAINIIDEAFSKHQGLVSMEDVNIAAELYISNKQYDKALEIITDFSGIVLEKKTSEEGTSEENKAPENVTCTIPDGVPIDITVKLMVCLVHLNILEPLNPLLTTLVEQNPEDMGDLYLDVAEAFLDVGEYNSALPLLSALVCSERYNLAVVWLRHAECLKALGYMERAAESYGKVVDLAPLHLDARISLSTLQQQLGQPEKALEALEPMYDPDTLAQDANAAQQELKLLLHRSTLLFSQGKMYGYVDTLLTMLAMLLKVAMNRAQVCLISSSKSGERHLYLIKVSRDKISDSNDQESANCDAKAIFAVLTSVLTKDDWWNLLLKAIYSLCDLSRFQEAELLVDSSLEYYSFYDDRQKRKELEYFGLSAAILDKNFRKAYNYIRIMVMENVNKPQLWNIFNQVTMHSQDVRHHRFCLRLMLKNPENHALCVLNGHNAFVSGSFKHALGQYVQAFRTHPDEPLYSFCIGLTFIHMASQKYVLRRHALIVQGFSFLNRYLSLRGPCQESFYNLGRGLHQLGLIHLAIHYYQKALELPPLVVEGIELDQLDLRRDIAYNLSLIYQSSGNTGMAQTLLYTYCSI.

Residues 1–121 form a disordered region; sequence MSGFSPELID…TPEQPTAGDV (121 aa). Residue serine 2 is modified to N-acetylserine. A compositionally biased stretch (basic and acidic residues) spans 12–44; it reads LEGKISFEEFERRREERKTREKKSLQEKGKLSA. A Phosphoserine modification is found at serine 43. The segment covering 53–63 has biased composition (polar residues); the sequence is VPSSSGINSTK. The segment covering 92 to 113 has biased composition (acidic residues); the sequence is ENEDDEEEEEEEEEEEEEEETP. TPR repeat units lie at residues 149-182, 183-216, 217-250, 252-284, 290-323, 326-361, 421-454, 456-489, 491-523, 733-766, and 811-844; these read LRGLMGEANIRFARGEREEAILMCMEIIRQAPLA, YEPFSTLAMIYEDQGDMEKSLQFELIAAHLNPSD, TEEWVRLAEMSLEQDNIKQAIFCYTKALKYEPTN, RYLWERSSLYEQMGDHKMAMDGYRRILNLLSPS, MQLARDMAKSYYEANDVTSAINIIDEAFSKHQGL, MEDVNIAAELYISNKQYDKALEIITDFSGIVLEKKT, GDLYLDVAEAFLDVGEYNSALPLLSALVCSERYN, AVVWLRHAECLKALGYMERAAESYGKVVDLAPLH, DARISLSTLQQQLGQPEKALEALEPMYDPDTLA, HALCVLNGHNAFVSGSFKHALGQYVQAFRTHPDE, and QESFYNLGRGLHQLGLIHLAIHYYQKALELPPLV. Serine 282 carries the post-translational modification Phosphoserine.

Part of the TFIIIC subcomplex TFIIIC2, consisting of six subunits, GTF3C1, GTF3C2, GTF3C3, GTF3C4, GTF3C5 and GTF3C6. Interacts with BRF1 and TBP.

Its subcellular location is the nucleus. Involved in RNA polymerase III-mediated transcription. Integral, tightly associated component of the DNA-binding TFIIIC2 subcomplex that directly binds tRNA and virus-associated RNA promoters. The sequence is that of General transcription factor 3C polypeptide 3 (GTF3C3) from Homo sapiens (Human).